The following is an 81-amino-acid chain: CLAVATA3/ESR (CLE)-related protein 5 (81 aa).

A signal peptide spans 1 to 26; sequence MATLILKQTLIILLIIFSLQTLSSQA. A hydroxyproline mark is found at proline 73 and proline 76. O-linked (Ara...) hydroxyproline glycosylation is present at proline 76.

The protein belongs to the CLV3/ESR signal peptide family. In terms of processing, the O-glycosylation (arabinosylation) of the hydroxyproline Pro-76 enhances binding affinity of the CLE5p peptide for its receptor. Mostly expressed in roots, and, to a lower extent, in seedlings, stems, apex, flowers and siliques.

The protein resides in the secreted. Its subcellular location is the extracellular space. Extracellular signal peptide that regulates cell fate. The protein is CLAVATA3/ESR (CLE)-related protein 5 of Arabidopsis thaliana (Mouse-ear cress).